We begin with the raw amino-acid sequence, 696 residues long: Elongation factor G (696 aa).

The 283-residue stretch at 8–290 folds into the tr-type G domain; that stretch reads ERYRNIGIMA…AVLDYLPSPL (283 aa). GTP contacts are provided by residues 17 to 24, 88 to 92, and 142 to 145; these read AHIDAGKT, DTPGH, and NKMD.

This sequence belongs to the TRAFAC class translation factor GTPase superfamily. Classic translation factor GTPase family. EF-G/EF-2 subfamily.

The protein localises to the cytoplasm. Functionally, catalyzes the GTP-dependent ribosomal translocation step during translation elongation. During this step, the ribosome changes from the pre-translocational (PRE) to the post-translocational (POST) state as the newly formed A-site-bound peptidyl-tRNA and P-site-bound deacylated tRNA move to the P and E sites, respectively. Catalyzes the coordinated movement of the two tRNA molecules, the mRNA and conformational changes in the ribosome. This chain is Elongation factor G, found in Nitrosomonas eutropha (strain DSM 101675 / C91 / Nm57).